The primary structure comprises 419 residues: CinA-like protein (419 aa).

Belongs to the CinA family.

The protein is CinA-like protein of Synechococcus sp. (strain CC9902).